Here is a 736-residue protein sequence, read N- to C-terminus: Phosphoribosylformylglycinamidine synthase subunit PurL (736 aa).

Histidine 49 is an active-site residue. ATP-binding residues include tyrosine 52 and lysine 91. Glutamate 93 provides a ligand contact to Mg(2+). Substrate-binding positions include 94–97 and arginine 116; that span reads SHNH. Histidine 95 serves as the catalytic Proton acceptor. Aspartate 117 is a Mg(2+) binding site. Residue glutamine 240 coordinates substrate. A Mg(2+)-binding site is contributed by aspartate 268. Residue 312 to 314 coordinates substrate; that stretch reads ESQ. 2 residues coordinate ATP: aspartate 493 and glycine 530. Asparagine 531 is a Mg(2+) binding site. Residue serine 533 participates in substrate binding.

Belongs to the FGAMS family. Monomer. Part of the FGAM synthase complex composed of 1 PurL, 1 PurQ and 2 PurS subunits.

It localises to the cytoplasm. The enzyme catalyses N(2)-formyl-N(1)-(5-phospho-beta-D-ribosyl)glycinamide + L-glutamine + ATP + H2O = 2-formamido-N(1)-(5-O-phospho-beta-D-ribosyl)acetamidine + L-glutamate + ADP + phosphate + H(+). It functions in the pathway purine metabolism; IMP biosynthesis via de novo pathway; 5-amino-1-(5-phospho-D-ribosyl)imidazole from N(2)-formyl-N(1)-(5-phospho-D-ribosyl)glycinamide: step 1/2. Part of the phosphoribosylformylglycinamidine synthase complex involved in the purines biosynthetic pathway. Catalyzes the ATP-dependent conversion of formylglycinamide ribonucleotide (FGAR) and glutamine to yield formylglycinamidine ribonucleotide (FGAM) and glutamate. The FGAM synthase complex is composed of three subunits. PurQ produces an ammonia molecule by converting glutamine to glutamate. PurL transfers the ammonia molecule to FGAR to form FGAM in an ATP-dependent manner. PurS interacts with PurQ and PurL and is thought to assist in the transfer of the ammonia molecule from PurQ to PurL. This Rhodopseudomonas palustris (strain BisB18) protein is Phosphoribosylformylglycinamidine synthase subunit PurL.